A 258-amino-acid polypeptide reads, in one-letter code: Acyl-[acyl-carrier-protein]--UDP-N-acetylglucosamine O-acyltransferase (258 aa).

It belongs to the transferase hexapeptide repeat family. LpxA subfamily. Homotrimer.

It localises to the cytoplasm. The enzyme catalyses a (3R)-hydroxyacyl-[ACP] + UDP-N-acetyl-alpha-D-glucosamine = a UDP-3-O-[(3R)-3-hydroxyacyl]-N-acetyl-alpha-D-glucosamine + holo-[ACP]. Its pathway is glycolipid biosynthesis; lipid IV(A) biosynthesis; lipid IV(A) from (3R)-3-hydroxytetradecanoyl-[acyl-carrier-protein] and UDP-N-acetyl-alpha-D-glucosamine: step 1/6. Its function is as follows. Involved in the biosynthesis of lipid A, a phosphorylated glycolipid that anchors the lipopolysaccharide to the outer membrane of the cell. This Syntrophobacter fumaroxidans (strain DSM 10017 / MPOB) protein is Acyl-[acyl-carrier-protein]--UDP-N-acetylglucosamine O-acyltransferase.